Here is an 844-residue protein sequence, read N- to C-terminus: RING finger containing E3 ubiquitin-protein ligase WSV222 (844 aa).

229 to 236 lines the ATP pocket; that stretch reads AEDDKGKT. Residues 308–359 form an RING-type; atypical zinc finger; the sequence is CGVCATSVEEDENEGKTTSLSWYQMNCKHYIHCECLMGMCAAAGNVQCPMCR.

As to quaternary structure, interacts with host UBE2E1/UBCH6; this interaction results in WSV222 auto-ubiquitination. Interacts with host tumor suppressor-like protein.

The catalysed reaction is S-ubiquitinyl-[E2 ubiquitin-conjugating enzyme]-L-cysteine + [acceptor protein]-L-lysine = [E2 ubiquitin-conjugating enzyme]-L-cysteine + N(6)-ubiquitinyl-[acceptor protein]-L-lysine.. Its pathway is protein modification; protein ubiquitination. In terms of biological role, probable E3 ubiquitin-protein ligase which accepts ubiquitin from the E2 ubiquitin-conjugating enzyme UBE2E1/UBCH6 in the form of a thioester and then directly transfers the ubiquitin to targeted substrates. Mediates ubiquitination of host tumor-suppressor-like protein (TSL) targeting it for degradation. Might function as an anti-apoptosis protein by counteracting TSL-induced apoptosis. The polypeptide is RING finger containing E3 ubiquitin-protein ligase WSV222 (White spot syndrome virus (isolate Shrimp/China/Tongan/1996) (WSSV)).